Reading from the N-terminus, the 138-residue chain is Large ribosomal subunit protein uL16 (138 aa).

It belongs to the universal ribosomal protein uL16 family. In terms of assembly, part of the 50S ribosomal subunit.

In terms of biological role, binds 23S rRNA and is also seen to make contacts with the A and possibly P site tRNAs. The chain is Large ribosomal subunit protein uL16 from Acholeplasma laidlawii (strain PG-8A).